Consider the following 688-residue polypeptide: Potassium-transporting ATPase ATP-binding subunit (688 aa).

4 consecutive transmembrane segments (helical) span residues 34 to 54 (PVMF…LAIL), 62 to 82 (AMFT…ANMA), 219 to 239 (VALT…TATL), and 260 to 280 (VLVA…LSAI). D313 serves as the catalytic 4-aspartylphosphate intermediate. ATP contacts are provided by residues D350, E354, 383–390 (FSAQTRMS), and K401. 2 residues coordinate Mg(2+): D524 and D528. Helical transmembrane passes span 594–614 (FAII…LNIM), 622–642 (AILS…PLAL), and 662–682 (IYGL…DLLL).

Belongs to the cation transport ATPase (P-type) (TC 3.A.3) family. Type IA subfamily. In terms of assembly, the system is composed of three essential subunits: KdpA, KdpB and KdpC.

It is found in the cell inner membrane. It carries out the reaction K(+)(out) + ATP + H2O = K(+)(in) + ADP + phosphate + H(+). Part of the high-affinity ATP-driven potassium transport (or Kdp) system, which catalyzes the hydrolysis of ATP coupled with the electrogenic transport of potassium into the cytoplasm. This subunit is responsible for energy coupling to the transport system and for the release of the potassium ions to the cytoplasm. The chain is Potassium-transporting ATPase ATP-binding subunit from Yersinia pseudotuberculosis serotype O:1b (strain IP 31758).